The sequence spans 337 residues: Glyceraldehyde-3-phosphate dehydrogenase (337 aa).

Residues 12-13 (RI), aspartate 34, and lysine 79 contribute to the NAD(+) site. Residues 150–152 (SCT), threonine 181, 210–211 (TG), and arginine 233 each bind D-glyceraldehyde 3-phosphate. Residue cysteine 151 is the Nucleophile of the active site. Asparagine 315 contacts NAD(+).

It belongs to the glyceraldehyde-3-phosphate dehydrogenase family. As to quaternary structure, homotetramer.

It localises to the cytoplasm. The catalysed reaction is D-glyceraldehyde 3-phosphate + phosphate + NAD(+) = (2R)-3-phospho-glyceroyl phosphate + NADH + H(+). It participates in carbohydrate degradation; glycolysis; pyruvate from D-glyceraldehyde 3-phosphate: step 1/5. In Phanerodontia chrysosporium (White-rot fungus), this protein is Glyceraldehyde-3-phosphate dehydrogenase (GPD).